The chain runs to 319 residues: ATP-dependent 6-phosphofructokinase (319 aa).

Position 11 (G11) interacts with ATP. An ADP-binding site is contributed by 21-25 (RAVVR). Residues 72–73 (RC) and 102–105 (GDGS) contribute to the ATP site. D103 provides a ligand contact to Mg(2+). Residue 125–127 (TID) participates in substrate binding. The Proton acceptor role is filled by D127. R154 is a binding site for ADP. Substrate is bound by residues R162 and 169 to 171 (MGR). Residues 185-187 (GAE), R211, and 213-215 (KKH) contribute to the ADP site. Residues E222, R243, and 249 to 252 (HIQR) each bind substrate.

It belongs to the phosphofructokinase type A (PFKA) family. ATP-dependent PFK group I subfamily. Prokaryotic clade 'B1' sub-subfamily. Homotetramer. Mg(2+) serves as cofactor.

It localises to the cytoplasm. It carries out the reaction beta-D-fructose 6-phosphate + ATP = beta-D-fructose 1,6-bisphosphate + ADP + H(+). It participates in carbohydrate degradation; glycolysis; D-glyceraldehyde 3-phosphate and glycerone phosphate from D-glucose: step 3/4. With respect to regulation, allosterically activated by ADP and other diphosphonucleosides, and allosterically inhibited by phosphoenolpyruvate. Catalyzes the phosphorylation of D-fructose 6-phosphate to fructose 1,6-bisphosphate by ATP, the first committing step of glycolysis. The sequence is that of ATP-dependent 6-phosphofructokinase from Halalkalibacterium halodurans (strain ATCC BAA-125 / DSM 18197 / FERM 7344 / JCM 9153 / C-125) (Bacillus halodurans).